A 219-amino-acid chain; its full sequence is Probable GTP-binding protein EngB (219 aa).

One can recognise an EngB-type G domain in the interval 24-207 (VQPEIAFAGR…HALIESWLRP (184 aa)). GTP contacts are provided by residues 32–39 (GRSNAGKS), 59–63 (GRTQH), 81–84 (DLPG), 148–151 (TKCD), and 185–188 (LFSA). Mg(2+)-binding residues include serine 39 and threonine 61.

Belongs to the TRAFAC class TrmE-Era-EngA-EngB-Septin-like GTPase superfamily. EngB GTPase family. The cofactor is Mg(2+).

Functionally, necessary for normal cell division and for the maintenance of normal septation. This chain is Probable GTP-binding protein EngB, found in Burkholderia thailandensis (strain ATCC 700388 / DSM 13276 / CCUG 48851 / CIP 106301 / E264).